A 98-amino-acid polypeptide reads, in one-letter code: NADH-ubiquinone oxidoreductase chain 4L (98 aa).

Transmembrane regions (helical) follow at residues 1-21 (MSLVYMNTALAFSISMLGLLM), 30-50 (LLCLEGMMLSLFTLGAITILT), and 61-81 (IVLLVFAACEAAVGLSLLVMV).

It belongs to the complex I subunit 4L family. Core subunit of respiratory chain NADH dehydrogenase (Complex I) which is composed of 45 different subunits.

The protein resides in the mitochondrion inner membrane. The catalysed reaction is a ubiquinone + NADH + 5 H(+)(in) = a ubiquinol + NAD(+) + 4 H(+)(out). Core subunit of the mitochondrial membrane respiratory chain NADH dehydrogenase (Complex I) which catalyzes electron transfer from NADH through the respiratory chain, using ubiquinone as an electron acceptor. Part of the enzyme membrane arm which is embedded in the lipid bilayer and involved in proton translocation. The protein is NADH-ubiquinone oxidoreductase chain 4L (MT-ND4L) of Crocidura russula (Greater white-toothed shrew).